Reading from the N-terminus, the 247-residue chain is uncharacterized protein (247 aa).

3 helical membrane-spanning segments follow: residues 108-128, 136-156, and 194-214; these read WYIN…FLII, IFSV…NIIC, and GAKL…LFFI.

It localises to the membrane. This is an uncharacterized protein from Caenorhabditis elegans.